Consider the following 279-residue polypeptide: Elongation factor Ts (279 aa).

The tract at residues 80–83 is involved in Mg(2+) ion dislocation from EF-Tu; the sequence is TDFV.

It belongs to the EF-Ts family.

The protein localises to the cytoplasm. Functionally, associates with the EF-Tu.GDP complex and induces the exchange of GDP to GTP. It remains bound to the aminoacyl-tRNA.EF-Tu.GTP complex up to the GTP hydrolysis stage on the ribosome. This Borreliella afzelii (strain PKo) (Borrelia afzelii) protein is Elongation factor Ts.